Here is a 377-residue protein sequence, read N- to C-terminus: Chaperone protein DnaJ (377 aa).

A J domain is found at 5 to 70; that stretch reads DYYEILGVSR…QKRAAYDQYG (66 aa). A CR-type zinc finger spans residues 132–210; that stretch reads GVTKEIRIPT…CHGHGRIEKS (79 aa). Zn(2+) contacts are provided by C145, C148, C162, C165, C184, C187, C198, and C201. 4 CXXCXGXG motif repeats span residues 145–152, 162–169, 184–191, and 198–205; these read CDVCHGSG, CPTCHGAG, CPHCHGRG, and CNKCHGHG.

It belongs to the DnaJ family. Homodimer. Zn(2+) serves as cofactor.

The protein localises to the cytoplasm. Participates actively in the response to hyperosmotic and heat shock by preventing the aggregation of stress-denatured proteins and by disaggregating proteins, also in an autonomous, DnaK-independent fashion. Unfolded proteins bind initially to DnaJ; upon interaction with the DnaJ-bound protein, DnaK hydrolyzes its bound ATP, resulting in the formation of a stable complex. GrpE releases ADP from DnaK; ATP binding to DnaK triggers the release of the substrate protein, thus completing the reaction cycle. Several rounds of ATP-dependent interactions between DnaJ, DnaK and GrpE are required for fully efficient folding. Also involved, together with DnaK and GrpE, in the DNA replication of plasmids through activation of initiation proteins. This Edwardsiella ictaluri (strain 93-146) protein is Chaperone protein DnaJ.